A 271-amino-acid chain; its full sequence is Chorismate dehydratase (271 aa).

This sequence belongs to the MqnA/MqnD family. MqnA subfamily.

The enzyme catalyses chorismate = 3-[(1-carboxyvinyl)-oxy]benzoate + H2O. It functions in the pathway quinol/quinone metabolism; menaquinone biosynthesis. Functionally, catalyzes the dehydration of chorismate into 3-[(1-carboxyvinyl)oxy]benzoate, a step in the biosynthesis of menaquinone (MK, vitamin K2). This chain is Chorismate dehydratase, found in Thermus thermophilus (strain ATCC 27634 / DSM 579 / HB8).